Reading from the N-terminus, the 648-residue chain is Rho GTPase-activating protein 25 (648 aa).

Residues 46–151 (RPIKVGWLKK…WVKFLRRVAG (106 aa)) form the PH domain. The Rho-GAP domain maps to 160 to 354 (QRLDETVAYE…MMIRDHEVLF (195 aa)). A disordered region spans residues 356–559 (KSKDAPISPP…DLDSLQRTVQ (204 aa)). A phosphoserine mark is found at Ser363, Ser396, and Ser403. Residues 393 to 410 (RTDSFSNTASSPDATSPT) are compositionally biased toward polar residues. A Phosphothreonine modification is found at Thr407. Residues 417 to 431 (QHQEDSGKAPRENPG) show a composition bias toward basic and acidic residues. Polar residues-rich tracts occupy residues 453–462 (SAFQGTTSSK) and 497–515 (DQRTSTYDNVPTSPQSQGN). Phosphoserine is present on Ser537. A coiled-coil region spans residues 540–641 (EAGSKNSGED…VKEFVKSMEK (102 aa)).

In terms of biological role, GTPase activator for the Rho-type GTPases by converting them to an inactive GDP-bound state. The polypeptide is Rho GTPase-activating protein 25 (Arhgap25) (Mus musculus (Mouse)).